The following is a 175-amino-acid chain: uncharacterized protein (175 aa).

Disordered stretches follow at residues 68 to 112 and 153 to 175; these read NKNN…DQPY and PEKA…KLTT. Positions 94–105 are enriched in low complexity; sequence DEQPMMPYQQPP.

It belongs to the asfivirus H171R family.

It localises to the virion. This is an uncharacterized protein from African swine fever virus (isolate Tick/Malawi/Lil 20-1/1983) (ASFV).